The chain runs to 142 residues: Augurin-A (142 aa).

The signal sequence occupies residues 1 to 28 (MLSEKFHLRLLTLLTLLTALSLTDVASE). 2 propeptides span residues 29-66 (SKLE…LKRP) and 127-142 (GAAS…YDYY).

This sequence belongs to the augurin family.

The protein resides in the secreted. It is found in the cytoplasm. Its subcellular location is the apical cell membrane. Probable hormone. Required for the proper formation of the central nervous system by attenuating cell proliferation during development. This is Augurin-A from Danio rerio (Zebrafish).